We begin with the raw amino-acid sequence, 510 residues long: NAD(P)H-quinone oxidoreductase subunit 2 A, chloroplastic (510 aa).

The next 13 membrane-spanning stretches (helical) occupy residues 24 to 44 (LLLFDGSLIFPECILIFGLIL), 57 to 77 (IPWLYFISSTSLVLSITALLF), 99 to 119 (IFQFLILLCSTLCIPLSVEYI), 124 to 144 (MAITEFLLFVLTATLGGMFLC), 149 to 169 (LITIFVAPECFSLCSYLLSGY), 183 to 203 (YLLMGGASSSILVHGFSWLYG), 227 to 247 (PGISIALIFITVGIGFKLSPA), 295 to 315 (WHLLLEILAILSMILGNLIAI), 323 to 343 (MLAYSSIGQIGYVIIGIIVGD), 354 to 374 (YMLFYISMNLGTFACIVLFGL), 395 to 415 (ALSLALCLLSLGGLPPLAGFF), 418 to 438 (LYLFWCGWQAGLYFLVLIGLL), and 484 to 504 (MIVCVIASTIPGISMNPIIAI).

It belongs to the complex I subunit 2 family. NDH is composed of at least 16 different subunits, 5 of which are encoded in the nucleus.

It localises to the plastid. It is found in the chloroplast thylakoid membrane. It carries out the reaction a plastoquinone + NADH + (n+1) H(+)(in) = a plastoquinol + NAD(+) + n H(+)(out). The enzyme catalyses a plastoquinone + NADPH + (n+1) H(+)(in) = a plastoquinol + NADP(+) + n H(+)(out). In terms of biological role, NDH shuttles electrons from NAD(P)H:plastoquinone, via FMN and iron-sulfur (Fe-S) centers, to quinones in the photosynthetic chain and possibly in a chloroplast respiratory chain. The immediate electron acceptor for the enzyme in this species is believed to be plastoquinone. Couples the redox reaction to proton translocation, and thus conserves the redox energy in a proton gradient. The chain is NAD(P)H-quinone oxidoreductase subunit 2 A, chloroplastic from Solanum tuberosum (Potato).